We begin with the raw amino-acid sequence, 720 residues long: Polyribonucleotide nucleotidyltransferase (720 aa).

The Mg(2+) site is built by Asp-487 and Asp-493. Residues 554–613 (PRIETFKIPTDKIREVIGTGGKVIREIVEKTGAKVNIEDDGTVKVASSDGEAMKAAIKWI) form the KH domain. Positions 623–691 (GQIYDGTVVK…DRGKTRLSMK (69 aa)) constitute an S1 motif domain. The segment at 692 to 720 (AVDQTTGEDLEAKQKAEGGAEAPREAAGE) is disordered. Positions 701 to 720 (LEAKQKAEGGAEAPREAAGE) are enriched in basic and acidic residues.

The protein belongs to the polyribonucleotide nucleotidyltransferase family. Mg(2+) serves as cofactor.

Its subcellular location is the cytoplasm. The catalysed reaction is RNA(n+1) + phosphate = RNA(n) + a ribonucleoside 5'-diphosphate. Its function is as follows. Involved in mRNA degradation. Catalyzes the phosphorolysis of single-stranded polyribonucleotides processively in the 3'- to 5'-direction. The polypeptide is Polyribonucleotide nucleotidyltransferase (Bradyrhizobium sp. (strain BTAi1 / ATCC BAA-1182)).